Reading from the N-terminus, the 339-residue chain is 2-keto-3-deoxygluconate permease (339 aa).

10 helical membrane-spanning segments follow: residues 10–30 (IPGG…TFAP), 42–62 (GLIS…GASI), 77–97 (LVVT…RILP), 100–120 (GVEV…AMDM), 141–161 (AFVL…LGTA), 163–183 (IASF…VGFA), 199–219 (VQTL…LSVI), 224–244 (LLGV…LIVA), 254–274 (TAGI…VLIA), and 289–309 (TLVA…TAMW). Positions 315-339 (GGDGTVPKEDAVEEKAEQQRRRIIK) are disordered. Positions 320–339 (VPKEDAVEEKAEQQRRRIIK) are enriched in basic and acidic residues.

The protein belongs to the KdgT transporter family.

It localises to the cell inner membrane. It carries out the reaction 2-dehydro-3-deoxy-D-gluconate(in) + H(+)(in) = 2-dehydro-3-deoxy-D-gluconate(out) + H(+)(out). With respect to regulation, uptake is inhibited by the protonophore uncouplers carbonyl cyanide m-chlorophenylhydrazone (CCCP) and 2,4-dinitrophenol, and by NaN(3). Catalyzes the proton-dependent uptake of 2-keto-3-deoxygluconate (KDG) into the cell. Can also mediate the uptake of glucuronate with a low affinity, and may mediate the uptake of 5-keto-4-deoxyuronate (DKI) and 2,5-diketo-3-deoxygluconate (DKII), which are intermediates in pectin degradation. The sequence is that of 2-keto-3-deoxygluconate permease from Dickeya chrysanthemi (Pectobacterium chrysanthemi).